The chain runs to 320 residues: MSEKQTIKALPAHNPTQVKKLGPVSGFLSGGLAACGAVTLTNPFEVIKTRFQLQGQLTKLDPSKRIYKSVGQAFSLIARHEGIRGLQRGLGTAYVYQICLNGCRLGFYEPIRRTLNTWFLDDPKGNKLAINVASGAGSGLCGALFGSPFFLVKTRMQSYSPKFPVGQQYGYKHIFNAFSRIIKENGVKGLFVGADAAILRTVSGSSVQLPIYNWAKRMIEHYNLLEEGMIKHLTASAVSGFGVCCTMQIFDTVMTRMYNQKNKELYKNPIDCILKTIRSEGFFALYKGFGAHLARIAPHTIFCLTFVEQTNKLFLKFQKD.

3 Solcar repeats span residues 21-114 (LGPV…IRRT), 126-218 (NKLA…AKRM), and 227-313 (EGMI…TNKL). 6 helical membrane-spanning segments follow: residues 26 to 47 (GFLSGGLAACGAVTLTNPFEVI), 91 to 111 (GTAYVYQICLNGCRLGFYEPI), 129 to 145 (AINVASGAGSGLCGALF), 197 to 217 (AILRTVSGSSVQLPIYNWAKR), 233 to 253 (LTASAVSGFGVCCTMQIFDTV), and 285 to 306 (LYKGFGAHLARIAPHTIFCLTF).

The protein belongs to the mitochondrial carrier (TC 2.A.29) family.

The protein localises to the mitochondrion inner membrane. The enzyme catalyses a dicarboxylate(in) + sulfate(out) = a dicarboxylate(out) + sulfate(in). It catalyses the reaction (2S)-2-isopropylmalate(in) + sulfate(out) = (2S)-2-isopropylmalate(out) + sulfate(in). It carries out the reaction (2R,3S)-3-isopropylmalate(in) + sulfate(out) = (2R,3S)-3-isopropylmalate(out) + sulfate(in). The catalysed reaction is malonate(in) + sulfate(out) = malonate(out) + sulfate(in). The enzyme catalyses oxaloacetate(in) + sulfate(out) = oxaloacetate(out) + sulfate(in). It catalyses the reaction thiosulfate(in) + sulfate(out) = thiosulfate(out) + sulfate(in). Its function is as follows. Antiporter that exchanges dicarboxylates and sulfur oxoanions across the inner membrane of mitochondria. Exports alpha-isopropylmalate from mitochondrial matrix to the cytosol, where it serves as a precursor for leucine biosynthesis. The chain is Mitochondrial oxaloacetate transport protein (oac1) from Schizosaccharomyces pombe (strain 972 / ATCC 24843) (Fission yeast).